A 233-amino-acid polypeptide reads, in one-letter code: Large ribosomal subunit protein uL1 (233 aa).

It belongs to the universal ribosomal protein uL1 family. In terms of assembly, part of the 50S ribosomal subunit.

Functionally, binds directly to 23S rRNA. The L1 stalk is quite mobile in the ribosome, and is involved in E site tRNA release. In terms of biological role, protein L1 is also a translational repressor protein, it controls the translation of the L11 operon by binding to its mRNA. The polypeptide is Large ribosomal subunit protein uL1 (Marinomonas sp. (strain MWYL1)).